A 779-amino-acid chain; its full sequence is Filament-like plant protein 1 (779 aa).

Residues 1 to 14 (MEKRKRESSERSFG) show a composition bias toward basic and acidic residues. Disordered regions lie at residues 1-55 (MEKR…ETEK), 253-274 (ASFN…MDVS), and 315-336 (PETP…VVVP). Residues 47–200 (VSLEVETEKE…KENVMLRHEL (154 aa)) adopt a coiled-coil conformation. The segment covering 256-272 (NDHRSTDSHSDGGERMD) has biased composition (basic and acidic residues). The segment covering 324–336 (SGPESVTEEVVVP) has biased composition (low complexity). Residues 337–674 (SENSLASEIE…ANCQKTIASL (338 aa)) are a coiled coil. The segment covering 718 to 731 (FMTRNHPESIKPTK) has biased composition (basic and acidic residues). The segment at 718-764 (FMTRNHPESIKPTKETSPSSSSSTASAAVSMPVSTNRGSSEKNRNGF) is disordered. Residues 733–752 (TSPSSSSSTASAAVSMPVST) show a composition bias toward low complexity.

It belongs to the FPP family. Interacts with WPP/MAF proteins.

This Arabidopsis thaliana (Mouse-ear cress) protein is Filament-like plant protein 1 (FPP1).